A 156-amino-acid chain; its full sequence is MPRRGYVPKREVLPDPKYQSKLVSKLINVIMEDGKKSISEKICYGAFEIIKEKTGQDPLKVFKQAIENIKPVLEVRPRRVGGATYQVPMEVRPNRRLSLALRWLTTYARQRKEKTMKERLAGEILDAYNNVGSSIKKREETHKMAEANRAFAHYRW.

Belongs to the universal ribosomal protein uS7 family. In terms of assembly, part of the 30S ribosomal subunit. Contacts proteins S9 and S11.

Functionally, one of the primary rRNA binding proteins, it binds directly to 16S rRNA where it nucleates assembly of the head domain of the 30S subunit. Is located at the subunit interface close to the decoding center, probably blocks exit of the E-site tRNA. The chain is Small ribosomal subunit protein uS7 from Thermodesulfovibrio yellowstonii (strain ATCC 51303 / DSM 11347 / YP87).